A 94-amino-acid polypeptide reads, in one-letter code: Small ribosomal subunit protein uS17 (94 aa).

Belongs to the universal ribosomal protein uS17 family. In terms of assembly, part of the 30S ribosomal subunit.

Functionally, one of the primary rRNA binding proteins, it binds specifically to the 5'-end of 16S ribosomal RNA. The protein is Small ribosomal subunit protein uS17 of Streptomyces griseus subsp. griseus (strain JCM 4626 / CBS 651.72 / NBRC 13350 / KCC S-0626 / ISP 5235).